A 377-amino-acid polypeptide reads, in one-letter code: LIM/homeobox protein Lhx9 (377 aa).

LIM zinc-binding domains follow at residues 50 to 111 and 112 to 174; these read ALCA…RFSV and QRCA…LVQG. Disordered regions lie at residues 228–249, 309–346, and 358–377; these read NEND…QKTK, RQEN…TDLT, and SSLD…TNLF. The segment at residues 248 to 307 is a DNA-binding region (homeobox); the sequence is TKXMRTSFKHHQLRTMKSYFAINHNPDAKDLKQLAQKTGLTKRVLQVWFQNARAKFRRNV. Low complexity predominate over residues 333 to 346; the sequence is LTPPSTATTLTDLT. Over residues 365–377 the composition is skewed to polar residues; sequence SGSPPQTTLTNLF.

It localises to the nucleus. Its function is as follows. May be involved in gonadal development. This chain is LIM/homeobox protein Lhx9 (lhx9), found in Psalidodon fasciatus (Banded astyanax).